The chain runs to 158 residues: Putative cTAGE family member 3 (158 aa).

The stretch at 26–96 (QLQESQKQLL…AAVLEEDITD (71 aa)) forms a coiled coil.

Belongs to the cTAGE family. In terms of tissue distribution, expressed in normal tissues including colon, mammary gland, ovary, placenta, stomach and testis, as well as several fetal tissues.

Functionally, tumor-associated antigen. The protein is Putative cTAGE family member 3 (CTAGE3P) of Homo sapiens (Human).